A 147-amino-acid chain; its full sequence is Hemoglobin subunit beta-1 (147 aa).

Residues 3-147 (EWTAAERRHV…VVSALGRQYH (145 aa)) enclose the Globin domain. Heme b-binding residues include histidine 64 and histidine 93.

This sequence belongs to the globin family. In terms of assembly, hb 1 is a heterotetramer of two alpha-1 and two beta-1 chains. As to expression, red blood cells.

Involved in oxygen transport from gills to the various peripheral tissues. The polypeptide is Hemoglobin subunit beta-1 (hbb1) (Gadus morhua (Atlantic cod)).